The following is a 294-amino-acid chain: Acetylglutamate kinase (294 aa).

Substrate is bound by residues 63-64, arginine 85, and asparagine 188; that span reads GG.

Belongs to the acetylglutamate kinase family. ArgB subfamily.

It is found in the cytoplasm. The enzyme catalyses N-acetyl-L-glutamate + ATP = N-acetyl-L-glutamyl 5-phosphate + ADP. It functions in the pathway amino-acid biosynthesis; L-arginine biosynthesis; N(2)-acetyl-L-ornithine from L-glutamate: step 2/4. In terms of biological role, catalyzes the ATP-dependent phosphorylation of N-acetyl-L-glutamate. The polypeptide is Acetylglutamate kinase (Methanococcus aeolicus (strain ATCC BAA-1280 / DSM 17508 / OCM 812 / Nankai-3)).